The following is a 140-amino-acid chain: Methylglyoxal synthase (140 aa).

Residues 1–140 (MKIALIAHDR…HEGDRRPLAF (140 aa)) form the MGS-like domain. Substrate is bound by residues His8, Lys12, 34 to 37 (TGTT), and 54 to 55 (SG). The active-site Proton donor/acceptor is Asp60. Position 87 (His87) interacts with substrate.

Belongs to the methylglyoxal synthase family.

It carries out the reaction dihydroxyacetone phosphate = methylglyoxal + phosphate. In terms of biological role, catalyzes the formation of methylglyoxal from dihydroxyacetone phosphate. The sequence is that of Methylglyoxal synthase from Enterococcus faecalis (strain ATCC 700802 / V583).